Reading from the N-terminus, the 654-residue chain is Dystrobrevin beta (654 aa).

Met1 is subject to N-acetylmethionine. A phosphothreonine mark is found at Thr11, Thr69, Thr179, and Thr212. The ZZ-type zinc finger occupies 238–294 (FHPVECSYCHCESMMGFRYRCQQCHNYQLCQNCFWRGHAGGPHSNQHQMKELSSWKS). Zn(2+) is bound by residues Cys243, Cys246, Cys258, Cys261, Cys267, Cys270, His280, and His284. Ser394 carries the post-translational modification Phosphoserine. The syntrophin-binding region stretch occupies residues 399 to 448 (DEEHRLIARYAARLAAEAGNMTRPPTDASFNFDANKQQRQLIAELENKNR). Thr424 is subject to Phosphothreonine. Residues 429-519 (NFDANKQQRQ…LEGLMKLLKA (91 aa)) adopt a coiled-coil conformation. The interval 520 to 562 (QATGSPHTSPTHGGGRSMPMPVRSTSAGSTPTHGPQDSLSGVG) is disordered. 2 stretches are compositionally biased toward polar residues: residues 521 to 530 (ATGSPHTSPT) and 542 to 558 (RSTS…QDSL).

It belongs to the dystrophin family. Dystrobrevin subfamily. Interacts with dystrophin short form DP71 and syntrophins SNTG1 and SNTG2. Binds DTNBP1. Forms a specific complex composed of DMD, SNTB2 and SNTA1 in neuron; the interaction with SNTB2 and SNTA1 is DMD independent. Interacts with UTRN and dystrophin short form DP71 in the kidney and liver. Interacts with SNTB1, SNTB2 and SNTA1 in kidney and liver. Interacts with KIF5A. Interacts with HMG20A and HMG20B. Interacts with OLFM1. Interacts with PRKAR2B and PRKAR1A. Phosphorylated by PKA. Phosphorylation at Thr-11 alters the interaction with KIF5A. Expressed in neurons. In the isocortex, expressed most prominently in the somata (including the nuclei) and the dendrites of the pyramidal cells. Expressed in the hippocampus CA1, CA2, and CA3 neurons, namely in the initial segments of dendrites. Expressed in the Purkinje cells, molecular layer interneurons, and granule cells of cerebellum. Expressed in axon fascicles associated with the spinal trigeminal tract and in the internal capsule in the brainstem.

The protein localises to the cytoplasm. It localises to the postsynaptic density. Its subcellular location is the cell projection. The protein resides in the dendrite. It is found in the basal cell membrane. The protein localises to the postsynapse. It localises to the nucleus. Functionally, scaffolding protein that assembles DMD and SNTA1 molecules to the basal membrane of kidney cells and liver sinusoids. May function as a repressor of the SYN1 promoter through the binding of repressor element-1 (RE-1), in turn regulates SYN1 expression and may be involved in cell proliferation regulation during the early phase of neural differentiation. May be required for proper maturation and function of a subset of inhibitory synapses. The sequence is that of Dystrobrevin beta from Rattus norvegicus (Rat).